A 375-amino-acid chain; its full sequence is MPRCPSPSHAIIDLSAIAANLAVVRKRAGDRKVLFAVKADAYGHGAVEVSRYVEKHRYADWLAVATVAEGQELVEAGITLPILKLSPADPWDMDAAITSGIRLTVVDFDTLEAVSKAAVRLGITAKIHIAVDSGMGRIGLRPECLAELTAAADRAKGVEVEGVFTHLPISDVPEGAEFTRREIDTFMTAVSLIETHRGPFPLVHLANSGAILGHDLGKTSMVRAGIVGYGYDPNPHADRADLHPALSWISHVTFVKTVSVGDTIGYGRTWTASETTKIATVPVGYADGLSRGLSNKGHVLIRGSVHPIVGRICMDQFMVDLGPDSNVTVGDEVVLIGTQEDETLTADDMAELLGTISYEITCAISKRVDRYWVGQ.

Lys38 functions as the Proton acceptor; specific for D-alanine in the catalytic mechanism. Lys38 carries the N6-(pyridoxal phosphate)lysine modification. Arg137 is a binding site for substrate. Tyr266 acts as the Proton acceptor; specific for L-alanine in catalysis. Met314 contacts substrate.

It belongs to the alanine racemase family. Requires pyridoxal 5'-phosphate as cofactor.

The enzyme catalyses L-alanine = D-alanine. It participates in amino-acid biosynthesis; D-alanine biosynthesis; D-alanine from L-alanine: step 1/1. Catalyzes the interconversion of L-alanine and D-alanine. May also act on other amino acids. This is Alanine racemase (alr) from Cutibacterium acnes (strain DSM 16379 / KPA171202) (Propionibacterium acnes).